The primary structure comprises 100 residues: Replication restart protein PriB (100 aa).

Positions 4–99 (TNLVSLAALI…LRIQNIKEYK (96 aa)) constitute an SSB domain.

It belongs to the PriB family. As to quaternary structure, homodimer. Component of the replication restart primosome. Primosome assembly occurs via a 'hand-off' mechanism. PriA binds to replication forks, subsequently PriB then DnaT bind; DnaT then displaces ssDNA to generate the helicase loading substrate. Interacts with PriA with high affinity, independent of DNA presence.

With respect to regulation, priA:PriB complex-catalyzed duplex DNA winding is inhibited by CGS 15943 (CHEBI:131351); PriA is the drug target. Stimulates the DNA unwinding activity of PriA helicase, which does not seem to require single-stranded (ss)DNA-binding by PriB. Activates DNA-dependent ATP hydrolysis catalyzed by PriA. Weakly binds ssDNA. Weakly binds double-stranded (ds)DNA, a partial duplex DNA with a 3' ssDNA overhang, and a forked DNA structure with fully duplex leading and lagging strand arms in vitro. Its function is as follows. Involved in the restart of stalled replication forks, which reloads the replicative helicase on sites other than the origin of replication; the PriA-PriB pathway is the major replication restart pathway. During primosome assembly it facilitates complex formation between PriA and DnaT on DNA; stabilizes PriA on DNA. Stimulates the DNA unwinding activity of PriA helicase. This chain is Replication restart protein PriB, found in Neisseria gonorrhoeae (strain ATCC 700825 / FA 1090).